Consider the following 457-residue polypeptide: Bifunctional protein GlmU (457 aa).

Positions 1–229 (MYNCAIILAA…YEEIMGVNSR (229 aa)) are pyrophosphorylase. UDP-N-acetyl-alpha-D-glucosamine-binding positions include 8–11 (LAAG), K22, Q73, and 78–79 (GT). Residue D103 coordinates Mg(2+). UDP-N-acetyl-alpha-D-glucosamine contacts are provided by G140, E155, N170, and N227. N227 lines the Mg(2+) pocket. The linker stretch occupies residues 230-250 (VQLSEAEIVMRKRINHKHMVN). The segment at 251-457 (GVTFIDCEST…WLDKKGLLKK (207 aa)) is N-acetyltransferase. R332 and K350 together coordinate UDP-N-acetyl-alpha-D-glucosamine. The active-site Proton acceptor is the H362. Positions 365 and 376 each coordinate UDP-N-acetyl-alpha-D-glucosamine. Residues 385-386 (NY), A422, and R439 each bind acetyl-CoA.

The protein in the N-terminal section; belongs to the N-acetylglucosamine-1-phosphate uridyltransferase family. In the C-terminal section; belongs to the transferase hexapeptide repeat family. Homotrimer. Mg(2+) is required as a cofactor.

The protein resides in the cytoplasm. The catalysed reaction is alpha-D-glucosamine 1-phosphate + acetyl-CoA = N-acetyl-alpha-D-glucosamine 1-phosphate + CoA + H(+). The enzyme catalyses N-acetyl-alpha-D-glucosamine 1-phosphate + UTP + H(+) = UDP-N-acetyl-alpha-D-glucosamine + diphosphate. The protein operates within nucleotide-sugar biosynthesis; UDP-N-acetyl-alpha-D-glucosamine biosynthesis; N-acetyl-alpha-D-glucosamine 1-phosphate from alpha-D-glucosamine 6-phosphate (route II): step 2/2. It participates in nucleotide-sugar biosynthesis; UDP-N-acetyl-alpha-D-glucosamine biosynthesis; UDP-N-acetyl-alpha-D-glucosamine from N-acetyl-alpha-D-glucosamine 1-phosphate: step 1/1. Its pathway is bacterial outer membrane biogenesis; LPS lipid A biosynthesis. Catalyzes the last two sequential reactions in the de novo biosynthetic pathway for UDP-N-acetylglucosamine (UDP-GlcNAc). The C-terminal domain catalyzes the transfer of acetyl group from acetyl coenzyme A to glucosamine-1-phosphate (GlcN-1-P) to produce N-acetylglucosamine-1-phosphate (GlcNAc-1-P), which is converted into UDP-GlcNAc by the transfer of uridine 5-monophosphate (from uridine 5-triphosphate), a reaction catalyzed by the N-terminal domain. The chain is Bifunctional protein GlmU from Clostridium botulinum (strain Langeland / NCTC 10281 / Type F).